Reading from the N-terminus, the 98-residue chain is Citrate lyase acyl carrier protein (98 aa).

Serine 14 carries the post-translational modification O-(phosphoribosyl dephospho-coenzyme A)serine.

The protein belongs to the CitD family. As to quaternary structure, oligomer with a subunit composition of (alpha,beta,gamma)6.

It is found in the cytoplasm. Its function is as follows. Covalent carrier of the coenzyme of citrate lyase. In Shigella boydii serotype 4 (strain Sb227), this protein is Citrate lyase acyl carrier protein.